The chain runs to 151 residues: Transcription elongation factor Spt5 (151 aa).

The 31-residue stretch at 98–128 (PGQVVEIVAGAFKGMKARVIDVNQSKGQVTV) folds into the KOW domain.

Belongs to the archaeal Spt5 family. Heterodimer composed of Spt4 and Spt5. Interacts with RNA polymerase (RNAP).

Functionally, stimulates transcription elongation. The protein is Transcription elongation factor Spt5 of Aeropyrum pernix (strain ATCC 700893 / DSM 11879 / JCM 9820 / NBRC 100138 / K1).